The sequence spans 88 residues: UPF0367 protein Tery_1229 (88 aa).

Belongs to the UPF0367 family.

The chain is UPF0367 protein Tery_1229 from Trichodesmium erythraeum (strain IMS101).